A 503-amino-acid polypeptide reads, in one-letter code: Cobyric acid synthase (503 aa).

Positions 245–447 constitute a GATase cobBQ-type domain; that stretch reads DISIAIIRLP…LHGIFDEISL (203 aa). C326 functions as the Nucleophile in the catalytic mechanism. Residue H439 is part of the active site.

It belongs to the CobB/CobQ family. CobQ subfamily.

The protein operates within cofactor biosynthesis; adenosylcobalamin biosynthesis. Its function is as follows. Catalyzes amidations at positions B, D, E, and G on adenosylcobyrinic A,C-diamide. NH(2) groups are provided by glutamine, and one molecule of ATP is hydrogenolyzed for each amidation. The polypeptide is Cobyric acid synthase (Alkaliphilus metalliredigens (strain QYMF)).